We begin with the raw amino-acid sequence, 87 residues long: Acyl-CoA-binding protein 2 (87 aa).

One can recognise an ACB domain in the interval 2–87 (VSQLFEEKAK…VDNLIAKYSS (86 aa)). An acyl-CoA contacts are provided by residues 29-33 (YGLYK), Lys51, Lys55, and Tyr74.

The protein belongs to the ACBP family.

Binds medium- and long-chain acyl-CoA esters with very high affinity and may function as an intracellular carrier of acyl-CoA esters. This chain is Acyl-CoA-binding protein 2 (ACB2), found in Saccharomyces pastorianus (strain ATCC 76670 / Carlsberg bottom yeast no.2 / CBS 1503 / CLIB 180 / NBRC 10610 / NRRL Y-1525) (Saaz-type lager yeast).